A 538-amino-acid polypeptide reads, in one-letter code: AAA ATPase forming ring-shaped complexes (538 aa).

The stretch at 14–54 forms a coiled coil; sequence ARELRLANHRLGAQNEKLTEALKASREKLAEINSRLADMAE. An ATP-binding site is contributed by 240-245; the sequence is GNGKTL.

It belongs to the AAA ATPase family. As to quaternary structure, homohexamer. Assembles into a hexameric ring structure.

In Corynebacterium urealyticum (strain ATCC 43042 / DSM 7109), this protein is AAA ATPase forming ring-shaped complexes.